The chain runs to 98 residues: NADH-ubiquinone oxidoreductase chain 4L (98 aa).

Transmembrane regions (helical) follow at residues Pro2–Phe22, Ser28–Ile48, and Ile61–Val81.

Belongs to the complex I subunit 4L family. In terms of assembly, core subunit of respiratory chain NADH dehydrogenase (Complex I) which is composed of 45 different subunits.

It is found in the mitochondrion inner membrane. It carries out the reaction a ubiquinone + NADH + 5 H(+)(in) = a ubiquinol + NAD(+) + 4 H(+)(out). In terms of biological role, core subunit of the mitochondrial membrane respiratory chain NADH dehydrogenase (Complex I) which catalyzes electron transfer from NADH through the respiratory chain, using ubiquinone as an electron acceptor. Part of the enzyme membrane arm which is embedded in the lipid bilayer and involved in proton translocation. The sequence is that of NADH-ubiquinone oxidoreductase chain 4L (MT-ND4L) from Allocebus trichotis (Hairy-eared dwarf lemur).